The following is a 398-amino-acid chain: Deoxyguanosinetriphosphate triphosphohydrolase-like protein (398 aa).

The HD domain maps to 68-215 (RLTHTLEVAQ…AAISDDIAYD (148 aa)).

This sequence belongs to the dGTPase family. Type 2 subfamily.

In Azorhizobium caulinodans (strain ATCC 43989 / DSM 5975 / JCM 20966 / LMG 6465 / NBRC 14845 / NCIMB 13405 / ORS 571), this protein is Deoxyguanosinetriphosphate triphosphohydrolase-like protein.